The sequence spans 47 residues: PhoP/PhoQ regulator MgrB (47 aa).

A helical transmembrane segment spans residues 6–26 (WVVLGIVVVVCLLLWAQVFNI).

It belongs to the MgrB family. May form homooligomers. Probably interacts with the periplasmic domain of PhoQ.

The protein localises to the cell inner membrane. PhoP-regulated transcription is redox-sensitive, being activated when the periplasm becomes more reducing. MgrB acts between DsbA/DsbB and PhoP/PhoQ in this pathway. Represses PhoP/PhoQ signaling, possibly by binding to the periplasmic domain of PhoQ, altering its activity and that of downstream effector PhoP. This chain is PhoP/PhoQ regulator MgrB, found in Salmonella gallinarum (strain 287/91 / NCTC 13346).